The primary structure comprises 363 residues: Transcription factor Sox-18A (363 aa).

The segment at 20–66 (NSTWVPPADTVPEVSLIPSSPPAPDSPAPSPKPGYGFSTCEEKHGDP) is disordered. Over residues 38–51 (SSPPAPDSPAPSPK) the composition is skewed to pro residues. Residues 68–136 (IRRPMNAFMV…QHLQDHPNYK (69 aa)) constitute a DNA-binding region (HMG box). Interaction with DNA regions lie at residues 70-83 (RPMN…KDER) and 94-106 (HNAV…GQSW). Residues 129-163 (LQDHPNYKYRPRRKKQAKKLKRMDPSPLLRNEGFT) form a disordered region. Over residues 135 to 149 (YKYRPRRKKQAKKLK) the composition is skewed to basic residues. Residues 149-210 (KRMDPSPLLR…VLEPSEPAFF (62 aa)) are important for transcriptional activation. In terms of domain architecture, Sox C-terminal spans 236-362 (KTMREISLPY…TAMYYTPCIT (127 aa)). Residues 308–316 (NEFDQYLNM) carry the 9aaTAD motif.

As to expression, expressed in the adult spleen, lung, heart and kidney, and at a lower level in the adult testis, liver and brain.

Its subcellular location is the nucleus. In terms of biological role, probable transcription factor. Binds to the consensus DNA sequence 5'-AACAAT-3'. Also binds 5'-CACAAT-3' and 5'-AATAAT-3' with similar affinity. The chain is Transcription factor Sox-18A (sox18-a) from Xenopus laevis (African clawed frog).